The primary structure comprises 864 residues: Leucine--tRNA ligase (864 aa).

The 'HIGH' region motif lies at Pro-42 to His-52. Positions Lys-622–Ser-626 match the 'KMSKS' region motif. Lys-625 contacts ATP.

The protein belongs to the class-I aminoacyl-tRNA synthetase family.

The protein localises to the cytoplasm. The enzyme catalyses tRNA(Leu) + L-leucine + ATP = L-leucyl-tRNA(Leu) + AMP + diphosphate. In Cellvibrio japonicus (strain Ueda107) (Pseudomonas fluorescens subsp. cellulosa), this protein is Leucine--tRNA ligase.